The sequence spans 1860 residues: Proprotein convertase subtilisin/kexin type 5 (1860 aa).

The first 32 residues, 1-32, serve as a signal peptide directing secretion; sequence MGWGSRCCCPGRLDLLCVLALLGGCLLPVCRT. Positions 33-114 are excised as a propeptide; it reads RVYTNHWAVK…QQVVKKRTKR (82 aa). Residues 115 to 1743 lie on the Extracellular side of the membrane; that stretch reads DYDFSRAQST…VRPATEHFKT (1629 aa). One can recognise a Peptidase S8 domain in the interval 134–453; it reads MWYMHCSDNT…FGLMDAEAMV (320 aa). Catalysis depends on charge relay system residues aspartate 171 and histidine 212. 2 N-linked (GlcNAc...) asparagine glycosylation sites follow: asparagine 225 and asparagine 381. Serine 386 functions as the Charge relay system in the catalytic mechanism. The 141-residue stretch at 461 to 601 folds into the P/Homo B domain; that stretch reads TVPRQHVCVE…SLVLYGTSVQ (141 aa). A Cell attachment site motif is present at residues 519–521; it reads RGD. FU repeat units lie at residues 630-680, 683-730, 734-777, 779-824, 832-879, 882-927, 929-979, 982-1028, 1032-1077, 1079-1121, 1125-1168, 1177-1221, 1225-1272, 1274-1318, 1320-1363, 1365-1411, 1415-1461, 1465-1510, 1514-1559, 1563-1610, 1614-1659, and 1665-1712; these read EDYA…GHYH, KKRC…GSYQ, KNLC…GRYF, GQDC…SYYF, YKSC…GEYV, HGHC…WKFE, ENQC…GHYA, GNTC…GEVQ, YEEC…KTYS, EVEC…GFYG, MGEC…KTQE, LRKL…GTWP, SGSC…GSYA, DGIC…RHVA, KGVC…GFYA, SRHC…GTYY, TKEC…SEYW, APGC…GYYA, SNRC…GYYA, TGRC…HYYV, TQTC…GEYR, and KFNC…SDPP. Residues 636–1727 are CRM (Cys-rich motif); sequence CDPECSEVGC…CDCQDTTDEC (1092 aa). N-linked (GlcNAc...) asparagine glycosylation is present at asparagine 665. N-linked (GlcNAc...) asparagine glycosylation is found at asparagine 752, asparagine 802, and asparagine 852. The region spanning 869 to 913 is the PLAC domain; that stretch reads MGAICKDGEYVDEHGHCQTCEASCAKCQGPTQEDCTTCPMTRIFD. Residue asparagine 1014 is glycosylated (N-linked (GlcNAc...) asparagine). Residue asparagine 1191 is glycosylated (N-linked (GlcNAc...) asparagine). N-linked (GlcNAc...) asparagine glycosylation occurs at asparagine 1290. Asparagine 1497 carries N-linked (GlcNAc...) asparagine glycosylation. 2 N-linked (GlcNAc...) asparagine glycosylation sites follow: asparagine 1685 and asparagine 1707. Residues 1744-1764 form a helical membrane-spanning segment; sequence ALFITSSMMLVLLLGAAVVVW. The Cytoplasmic segment spans residues 1765–1860; it reads KKSRGRVQPA…YDDESYSYYQ (96 aa). AC stretches follow at residues 1807–1826 and 1838–1860; these read VIEY…IVYM and YGLL…SYYQ.

This sequence belongs to the peptidase S8 family. As to expression, expressed in T-lymphocytes.

The protein localises to the secreted. The protein resides in the endomembrane system. Serine endoprotease that processes various proproteins by cleavage at paired basic amino acids, recognizing the RXXX[KR]R consensus motif. Likely functions in the constitutive and regulated secretory pathways. Plays an essential role in pregnancy establishment by proteolytic activation of a number of important factors such as BMP2, CALD1 and alpha-integrins. In Homo sapiens (Human), this protein is Proprotein convertase subtilisin/kexin type 5 (PCSK5).